Here is a 422-residue protein sequence, read N- to C-terminus: Glutamate-1-semialdehyde 2,1-aminomutase (422 aa).

The residue at position 258 (K258) is an N6-(pyridoxal phosphate)lysine.

It belongs to the class-III pyridoxal-phosphate-dependent aminotransferase family. HemL subfamily. Homodimer. Requires pyridoxal 5'-phosphate as cofactor.

The protein resides in the cytoplasm. The catalysed reaction is (S)-4-amino-5-oxopentanoate = 5-aminolevulinate. It functions in the pathway porphyrin-containing compound metabolism; protoporphyrin-IX biosynthesis; 5-aminolevulinate from L-glutamyl-tRNA(Glu): step 2/2. The protein is Glutamate-1-semialdehyde 2,1-aminomutase of Chlamydia muridarum (strain MoPn / Nigg).